The primary structure comprises 202 residues: Small ribosomal subunit protein uS4c (202 aa).

Residues 90–153 enclose the S4 RNA-binding domain; sequence MRLDNVIFRL…KSETIISKNI (64 aa).

It belongs to the universal ribosomal protein uS4 family. Part of the 30S ribosomal subunit. Contacts protein S5. The interaction surface between S4 and S5 is involved in control of translational fidelity.

Its subcellular location is the plastid. The protein localises to the chloroplast. One of the primary rRNA binding proteins, it binds directly to 16S rRNA where it nucleates assembly of the body of the 30S subunit. Functionally, with S5 and S12 plays an important role in translational accuracy. The protein is Small ribosomal subunit protein uS4c (rps4) of Sphaerocarpos donnelli (Liverwort).